Reading from the N-terminus, the 211-residue chain is Large ribosomal subunit protein uL4 (211 aa).

Residues glutamine 41 to lysine 52 show a composition bias toward polar residues. The disordered stretch occupies residues glutamine 41 to isoleucine 78. Basic residues predominate over residues glycine 60–glycine 71.

The protein belongs to the universal ribosomal protein uL4 family. As to quaternary structure, part of the 50S ribosomal subunit.

Functionally, one of the primary rRNA binding proteins, this protein initially binds near the 5'-end of the 23S rRNA. It is important during the early stages of 50S assembly. It makes multiple contacts with different domains of the 23S rRNA in the assembled 50S subunit and ribosome. Forms part of the polypeptide exit tunnel. This Rippkaea orientalis (strain PCC 8801 / RF-1) (Cyanothece sp. (strain PCC 8801)) protein is Large ribosomal subunit protein uL4.